The following is a 347-amino-acid chain: GMP reductase (347 aa).

Residue 108-131 coordinates NADP(+); the sequence is ADFEKTKQILDLNPALNFVCIDVA. G181 and G183 together coordinate K(+). C186 acts as the Thioimidate intermediate in catalysis. NADP(+) is bound at residue 216–239; that stretch reads IVSDGGCTTPGDVAKAFGGGADFV.

Belongs to the IMPDH/GMPR family. GuaC type 1 subfamily. As to quaternary structure, homotetramer.

It carries out the reaction IMP + NH4(+) + NADP(+) = GMP + NADPH + 2 H(+). Its function is as follows. Catalyzes the irreversible NADPH-dependent deamination of GMP to IMP. It functions in the conversion of nucleobase, nucleoside and nucleotide derivatives of G to A nucleotides, and in maintaining the intracellular balance of A and G nucleotides. The sequence is that of GMP reductase from Escherichia coli O127:H6 (strain E2348/69 / EPEC).